The following is a 207-amino-acid chain: dITP/XTP pyrophosphatase (207 aa).

Residue 10 to 15 coordinates substrate; sequence TRNAGK. Residues E43 and D72 each contribute to the Mg(2+) site. The active-site Proton acceptor is the D72. Residues S73, 161-164, K184, and 189-190 each bind substrate; these read FGYD and HR.

It belongs to the HAM1 NTPase family. In terms of assembly, homodimer. Mg(2+) serves as cofactor.

The catalysed reaction is XTP + H2O = XMP + diphosphate + H(+). The enzyme catalyses dITP + H2O = dIMP + diphosphate + H(+). It catalyses the reaction ITP + H2O = IMP + diphosphate + H(+). Pyrophosphatase that catalyzes the hydrolysis of nucleoside triphosphates to their monophosphate derivatives, with a high preference for the non-canonical purine nucleotides XTP (xanthosine triphosphate), dITP (deoxyinosine triphosphate) and ITP. Seems to function as a house-cleaning enzyme that removes non-canonical purine nucleotides from the nucleotide pool, thus preventing their incorporation into DNA/RNA and avoiding chromosomal lesions. This Nitratidesulfovibrio vulgaris (strain ATCC 29579 / DSM 644 / CCUG 34227 / NCIMB 8303 / VKM B-1760 / Hildenborough) (Desulfovibrio vulgaris) protein is dITP/XTP pyrophosphatase.